We begin with the raw amino-acid sequence, 195 residues long: ATP-dependent Clp protease proteolytic subunit (195 aa).

Serine 99 serves as the catalytic Nucleophile. Residue histidine 124 is part of the active site.

This sequence belongs to the peptidase S14 family. Fourteen ClpP subunits assemble into 2 heptameric rings which stack back to back to give a disk-like structure with a central cavity, resembling the structure of eukaryotic proteasomes.

The protein localises to the cytoplasm. The enzyme catalyses Hydrolysis of proteins to small peptides in the presence of ATP and magnesium. alpha-casein is the usual test substrate. In the absence of ATP, only oligopeptides shorter than five residues are hydrolyzed (such as succinyl-Leu-Tyr-|-NHMec, and Leu-Tyr-Leu-|-Tyr-Trp, in which cleavage of the -Tyr-|-Leu- and -Tyr-|-Trp bonds also occurs).. Functionally, cleaves peptides in various proteins in a process that requires ATP hydrolysis. Has a chymotrypsin-like activity. Plays a major role in the degradation of misfolded proteins. In Caldicellulosiruptor saccharolyticus (strain ATCC 43494 / DSM 8903 / Tp8T 6331), this protein is ATP-dependent Clp protease proteolytic subunit.